A 509-amino-acid chain; its full sequence is ATP synthase subunit alpha, mitochondrial (509 aa).

171–178 (GDRQTGKT) provides a ligand contact to ATP.

It belongs to the ATPase alpha/beta chains family. As to quaternary structure, F-type ATPases have 2 components, CF(1) - the catalytic core - and CF(0) - the membrane proton channel. CF(1) has five subunits: alpha(3), beta(3), gamma(1), delta(1), epsilon(1). CF(0) has three main subunits: a, b and c.

It is found in the mitochondrion. The protein resides in the mitochondrion inner membrane. In terms of biological role, mitochondrial membrane ATP synthase (F(1)F(0) ATP synthase or Complex V) produces ATP from ADP in the presence of a proton gradient across the membrane which is generated by electron transport complexes of the respiratory chain. F-type ATPases consist of two structural domains, F(1) - containing the extramembraneous catalytic core, and F(0) - containing the membrane proton channel, linked together by a central stalk and a peripheral stalk. During catalysis, ATP synthesis in the catalytic domain of F(1) is coupled via a rotary mechanism of the central stalk subunits to proton translocation. Subunits alpha and beta form the catalytic core in F(1). Rotation of the central stalk against the surrounding alpha(3)beta(3) subunits leads to hydrolysis of ATP in three separate catalytic sites on the beta subunits. Subunit alpha does not bear the catalytic high-affinity ATP-binding sites. The chain is ATP synthase subunit alpha, mitochondrial (ATPA) from Oryza sativa subsp. indica (Rice).